A 152-amino-acid polypeptide reads, in one-letter code: MTPTLDTKYVFTITARIGDVVTAGETGIGVRRIIPIIGGEVTGAVTGKVLPFGADFQTIRPNELIDLEAKYAFETADGAIVYVENKGIRFGPVELLQELKRGEPVDPKLIYFRTVPRFETGHEKYRWLMEHIFVASAARHADRVVIDVHQVM.

This sequence belongs to the UPF0311 family.

The sequence is that of UPF0311 protein blr7842 from Bradyrhizobium diazoefficiens (strain JCM 10833 / BCRC 13528 / IAM 13628 / NBRC 14792 / USDA 110).